Here is a 301-residue protein sequence, read N- to C-terminus: Glycine--tRNA ligase alpha subunit (301 aa).

Belongs to the class-II aminoacyl-tRNA synthetase family. In terms of assembly, tetramer of two alpha and two beta subunits.

It localises to the cytoplasm. It catalyses the reaction tRNA(Gly) + glycine + ATP = glycyl-tRNA(Gly) + AMP + diphosphate. The chain is Glycine--tRNA ligase alpha subunit from Shewanella piezotolerans (strain WP3 / JCM 13877).